A 593-amino-acid polypeptide reads, in one-letter code: V-type ATP synthase alpha chain (593 aa).

Residue 246-253 participates in ATP binding; it reads GPFGAGKT.

This sequence belongs to the ATPase alpha/beta chains family.

The enzyme catalyses ATP + H2O + 4 H(+)(in) = ADP + phosphate + 5 H(+)(out). Functionally, produces ATP from ADP in the presence of a proton gradient across the membrane. The V-type alpha chain is a catalytic subunit. The chain is V-type ATP synthase alpha chain from Protochlamydia amoebophila (strain UWE25).